Here is a 625-residue protein sequence, read N- to C-terminus: ATP-dependent RNA helicase mrh4, mitochondrial (625 aa).

The N-terminal 16 residues, 1 to 16, are a transit peptide targeting the mitochondrion; that stretch reads MWKTARDSVCLICRSA. The segment covering 19–28 has biased composition (low complexity); the sequence is TTTSTSARAS. The disordered stretch occupies residues 19-119; the sequence is TTTSTSARAS…DKNTKGQKAL (101 aa). Residues 90–113 are compositionally biased toward basic and acidic residues; the sequence is DPRKAPKPKPVEEDSRRDKRDKNT. A Q motif motif is present at residues 144-177; the sequence is QAFDQFDLLPVVKEAIAQEALKGMTEIKPTPVQR. In terms of domain architecture, Helicase ATP-binding spans 195-406; sequence PKSDNGREEF…EEQFPYINRI (212 aa). Position 208–215 (208–215) interacts with ATP; it reads AETGSGKT. The DEAD box motif lies at 353–356; it reads DEAD. The 173-residue stretch at 453-625 folds into the Helicase C-terminal domain; it reads EGPKSEIDVK…ESMFMGQALV (173 aa).

Belongs to the DEAD box helicase family. MRH4 subfamily.

It localises to the mitochondrion. It catalyses the reaction ATP + H2O = ADP + phosphate + H(+). In terms of biological role, ATP-binding RNA helicase involved in mitochondrial RNA metabolism. Required for maintenance of mitochondrial DNA. The sequence is that of ATP-dependent RNA helicase mrh4, mitochondrial (drh-15) from Neurospora crassa (strain ATCC 24698 / 74-OR23-1A / CBS 708.71 / DSM 1257 / FGSC 987).